The following is a 434-amino-acid chain: Putative F-box/FBD/LRR-repeat protein At1g16940 (434 aa).

The 57-residue stretch at 10 to 66 folds into the F-box domain; that stretch reads HNIINQLPDSLLCEIFFNLPTEEVVKTSLICRRWRYVWQSLPGLDLVINGSKNYDKF. LRR repeat units follow at residues 72 to 99, 114 to 141, 164 to 189, 204 to 231, 252 to 277, and 306 to 331; these read FMFL…MMNN, RRYV…KLHR, INFV…TMDK, CLTN…KLNR, DVAY…TISF, and MAVG…VMGF. An FBD domain is found at 336-385; the sequence is WGINFSDVPQCVLSSLEFVEVKAREVADMKKLWSYFMENSTVLKKFTLCL.

This is Putative F-box/FBD/LRR-repeat protein At1g16940 from Arabidopsis thaliana (Mouse-ear cress).